The chain runs to 445 residues: Homogentisate 1,2-dioxygenase (445 aa).

At lysine 98 the chain carries N6-acetyllysine. 3 residues coordinate Fe cation: histidine 335, glutamate 341, and histidine 371. At lysine 414 the chain carries N6-succinyllysine.

It belongs to the homogentisate dioxygenase family. Homohexamer arranged as a dimer of trimers. The cofactor is Fe cation. In terms of tissue distribution, highest expression in the prostate, small intestine, colon, kidney and liver.

The enzyme catalyses homogentisate + O2 = 4-maleylacetoacetate + H(+). It functions in the pathway amino-acid degradation; L-phenylalanine degradation; acetoacetate and fumarate from L-phenylalanine: step 4/6. Catalyzes the conversion of homogentisate to maleylacetoacetate. The protein is Homogentisate 1,2-dioxygenase (HGD) of Homo sapiens (Human).